Consider the following 216-residue polypeptide: Capsule polysaccharide export ATP-binding protein CtrD (216 aa).

Residues 2 to 215 enclose the ABC transporter domain; sequence ISVEHVSKRY…DKAYEYYNSL (214 aa). 38-45 lines the ATP pocket; sequence GRNGAGKS.

Belongs to the ABC transporter superfamily.

It localises to the cell inner membrane. The catalysed reaction is ATP + H2O + capsular polysaccharide-[capsular polysaccharide-binding protein]Side 1 = ADP + phosphate + capsular polysaccharideSide 2 + [capsular polysaccharide-binding protein]Side 1.. Functionally, putative ATP-binding protein, and an energy-coupling component of capsule polysaccharide export apparatus. This chain is Capsule polysaccharide export ATP-binding protein CtrD (ctrD), found in Neisseria meningitidis serogroup B (strain ATCC BAA-335 / MC58).